Reading from the N-terminus, the 241-residue chain is Glucosamine-6-phosphate deaminase (241 aa).

Aspartate 67 functions as the Proton acceptor; for enolization step in the catalytic mechanism. The active-site For ring-opening step is asparagine 136. Histidine 138 (proton acceptor; for ring-opening step) is an active-site residue. Glutamate 143 functions as the For ring-opening step in the catalytic mechanism.

This sequence belongs to the glucosamine/galactosamine-6-phosphate isomerase family. NagB subfamily.

It carries out the reaction alpha-D-glucosamine 6-phosphate + H2O = beta-D-fructose 6-phosphate + NH4(+). It functions in the pathway amino-sugar metabolism; N-acetylneuraminate degradation; D-fructose 6-phosphate from N-acetylneuraminate: step 5/5. Functionally, catalyzes the reversible isomerization-deamination of glucosamine 6-phosphate (GlcN6P) to form fructose 6-phosphate (Fru6P) and ammonium ion. The sequence is that of Glucosamine-6-phosphate deaminase from Halothermothrix orenii (strain H 168 / OCM 544 / DSM 9562).